A 323-amino-acid polypeptide reads, in one-letter code: tRNA dimethylallyltransferase (323 aa).

18-25 contributes to the ATP binding site; that stretch reads GPTASGKS. 20-25 contributes to the substrate binding site; it reads TASGKS. Interaction with substrate tRNA stretches follow at residues 43–46, 167–171, and 249–254; these read DSAQ, QRIQR, and RCVGYR.

Belongs to the IPP transferase family. As to quaternary structure, monomer. The cofactor is Mg(2+).

It carries out the reaction adenosine(37) in tRNA + dimethylallyl diphosphate = N(6)-dimethylallyladenosine(37) in tRNA + diphosphate. Its function is as follows. Catalyzes the transfer of a dimethylallyl group onto the adenine at position 37 in tRNAs that read codons beginning with uridine, leading to the formation of N6-(dimethylallyl)adenosine (i(6)A). The chain is tRNA dimethylallyltransferase from Nitrosospira multiformis (strain ATCC 25196 / NCIMB 11849 / C 71).